The chain runs to 263 residues: Urease accessory protein UreD 1 (263 aa).

This sequence belongs to the UreD family. As to quaternary structure, ureD, UreF and UreG form a complex that acts as a GTP-hydrolysis-dependent molecular chaperone, activating the urease apoprotein by helping to assemble the nickel containing metallocenter of UreC. The UreE protein probably delivers the nickel.

The protein resides in the cytoplasm. In terms of biological role, required for maturation of urease via the functional incorporation of the urease nickel metallocenter. This is Urease accessory protein UreD 1 from Synechococcus sp. (strain JA-3-3Ab) (Cyanobacteria bacterium Yellowstone A-Prime).